The primary structure comprises 125 residues: Calcitonin receptor-stimulating peptide 1 (125 aa).

A signal peptide spans methionine 1–alanine 25. Residues alanine 26–glutamine 77 constitute a propeptide that is removed on maturation. Cysteine 81 and cysteine 86 are oxidised to a cystine.

It belongs to the calcitonin family.

The protein localises to the secreted. Functionally, stimulates cAMP production via the calcitonin receptor (CT) but not via the CT-like (CL) receptor. This is Calcitonin receptor-stimulating peptide 1 (CRSP1) from Ovis aries (Sheep).